The primary structure comprises 223 residues: Pleckstrin homology domain-containing family B member 1 (223 aa).

The PH domain maps to 2–109; it reads ALVRGGWLWR…WKTALMEANS (108 aa).

In terms of assembly, homodimer. Interacts (via PH domain) with MYO1C. Interacts (via PH domain) with MYO7A. Binds transducins. In terms of tissue distribution, highly expressed in photoreceptor cells, oligodendrocytes and throughout the myelinated parts of the central nervous system. Detected in brain, liver, kidney, spleen and trachea.

It localises to the membrane. It is found in the cytoplasm. The sequence is that of Pleckstrin homology domain-containing family B member 1 (Plekhb1) from Rattus norvegicus (Rat).